Reading from the N-terminus, the 356-residue chain is Molybdenum import ATP-binding protein ModC (356 aa).

Residues 1-232 enclose the ABC transporter domain; that stretch reads MEDIHARFHI…LDLPIRLGED (232 aa). 33 to 40 serves as a coordination point for ATP; that stretch reads GHSGSGKT. In terms of domain architecture, Mop spans 291–356; the sequence is ETSVLNLLRG…VQVKSVALME (66 aa).

It belongs to the ABC transporter superfamily. Molybdate importer (TC 3.A.1.8) family. As to quaternary structure, the complex is composed of two ATP-binding proteins (ModC), two transmembrane proteins (ModB) and a solute-binding protein (ModA).

The protein localises to the cell inner membrane. The catalysed reaction is molybdate(out) + ATP + H2O = molybdate(in) + ADP + phosphate + H(+). In terms of biological role, part of the ABC transporter complex ModABC involved in molybdenum import. Responsible for energy coupling to the transport system. The chain is Molybdenum import ATP-binding protein ModC from Methylococcus capsulatus (strain ATCC 33009 / NCIMB 11132 / Bath).